Consider the following 131-residue polypeptide: Profilin-5 (131 aa).

This sequence belongs to the profilin family. As to quaternary structure, occurs in many kinds of cells as a complex with monomeric actin in a 1:1 ratio.

The protein resides in the cytoplasm. It localises to the cytoskeleton. In terms of biological role, binds to actin and affects the structure of the cytoskeleton. At high concentrations, profilin prevents the polymerization of actin, whereas it enhances it at low concentrations. By binding to PIP2, it inhibits the formation of IP3 and DG. This is Profilin-5 from Hevea brasiliensis (Para rubber tree).